A 567-amino-acid chain; its full sequence is Diphtheria toxin (567 aa).

The first 32 residues, 1 to 32, serve as a signal peptide directing secretion; that stretch reads MLVRGYVVSRKLFASILIGALLGIGAPPSAHA. Positions 53 and 97 each coordinate NAD(+). Glutamate 180 is a catalytic residue. 2 disulfides stabilise this stretch: cysteine 218–cysteine 233 and cysteine 493–cysteine 503.

As to quaternary structure, homodimer. In terms of processing, proteolytic activation by host furin cleaves the protein in two parts, Diphtheria toxin fragment A and Diphtheria toxin fragment B; which remain associated via a disulfide bond.

It catalyses the reaction diphthamide-[translation elongation factor 2] + NAD(+) = N-(ADP-D-ribosyl)diphthamide-[translation elongation factor 2] + nicotinamide + H(+). Its activity is regulated as follows. Partially inhibited by 1,8-naphthalimide (NAP). In terms of biological role, diphtheria toxin, produced by a phage infecting Corynebacterium diphtheriae, is a proenzyme that, after activation, catalyzes the covalent attachment of the ADP ribose moiety of NAD to eukaryotic elongation factor 2 (eEF-2). Fragment A is the catalytic portion responsible for enzymatic ADP-ribosylation of elongation factor 2, while fragment B is responsible for binding of toxin to cell receptors and entry of fragment A. This Corynebacterium diphtheriae protein is Diphtheria toxin.